Here is a 287-residue protein sequence, read N- to C-terminus: MRGFGSDSSQASGEEAKCPVNHKTRELWLHQARAAQSASTSAAPALPQSVQVAPASQPSQPSSYSSSSWSSWLRIPFFSQQSQSANSTQQAQPPKLSAPLLDETRVISSIPRTPDATPSACPVNHEVETGASPTGHWVYPSEKQFFEAMRRKGYDPHAADMKTVVPIHNAVNERAWAEILQWEAPYVEPVSKGGCGGPRLHSFSGLGTQHMSPRARINTLLGYQAPFDRHDWVIDRCGKKIEYVIDFYAGRSDGGNAGKLNFYLDVRPKLNSWEGFKMRALRAVGLS.

Residues 1 to 12 (MRGFGSDSSQAS) show a composition bias toward polar residues. Disordered stretches follow at residues 1–63 (MRGF…QPSS) and 81–100 (QSQS…SAPL). Composition is skewed to low complexity over residues 31-63 (QARA…QPSS) and 81-92 (QSQSANSTQQAQ).

It belongs to the cytochrome c-type heme lyase family.

It localises to the mitochondrion inner membrane. The catalysed reaction is holo-[cytochrome c] = apo-[cytochrome c] + heme b. Functionally, probable lyase that catalyzes the covalent linking of the heme group to the cytochrome C apoprotein to produce the mature functional cytochrome. The protein is Putative holocytochrome-c1 synthase of Chaetomium thermophilum (strain DSM 1495 / CBS 144.50 / IMI 039719) (Thermochaetoides thermophila).